The chain runs to 557 residues: Low affinity inorganic phosphate transporter 8 (557 aa).

The Cytoplasmic segment spans residues 1–20 (MATSHGVLRSLDNAKTQSYH). A helical membrane pass occupies residues 21–41 (YLAIVIAGMGFFTDAYDLFCI). The Extracellular segment spans residues 42-70 (TAVTKLIGRLYYSDPTNHSPGILPTNVNN). The chain crosses the membrane as a helical span at residues 71-91 (AITGVALCGTLAGQLFFGWLG). Over 92–98 (DKLGRKK) the chain is Cytoplasmic. Residues 99–119 (VYGITLTTMVGFALLSGLSFG) form a helical membrane-spanning segment. At 120-130 (STPKTVVTSLC) the chain is on the extracellular side. A helical transmembrane segment spans residues 131 to 151 (FFRFWLGFGIGGDYPLSAVIM). The Cytoplasmic portion of the chain corresponds to 152–162 (SEYANQKTRGS). The helical transmembrane segment at 163–183 (FIAAVFAMQGVGILVAGGVAM) threads the bilayer. Residues 184 to 210 (FVSKLFLLYFPAPDFETDAVLSTQPEG) are Extracellular-facing. Residues 211-231 (DFVWRIVLMFGAVPAALTYYW) form a helical membrane-spanning segment. Topologically, residues 232 to 294 (RMKMPETARY…LFSSEFLNRH (63 aa)) are cytoplasmic. The chain crosses the membrane as a helical span at residues 295-315 (GLHLLGTTSTWFLLDIAFYSL). Residues 316–346 (QLTQKDIYPTSGLVYKASKMNAIEEVFQLSR) are Extracellular-facing. A helical transmembrane segment spans residues 347-367 (AMFAVALIATVPGYWCTVFLI). The Cytoplasmic portion of the chain corresponds to 368–369 (EK). A helical membrane pass occupies residues 370 to 390 (IGRFRIQLIGFLVMSVCMWFL). Residues 391–414 (GHNYRSFRGEESACKNGSKYSFCN) lie on the Extracellular side of the membrane. A glycan (N-linked (GlcNAc...) asparagine) is linked at N406. Residues 415–435 (GNPVMFAILFGLTLFFANFGP) form a helical membrane-spanning segment. Topologically, residues 436–457 (NSTTFIVPAELFPARLRSTCHG) are cytoplasmic. Residues 458–478 (ISAAAGKSGAIVGAFGVQSYI) form a helical membrane-spanning segment. Residues 479-490 (GNSHDKSKGTKQ) are Extracellular-facing. The chain crosses the membrane as a helical span at residues 491-511 (AIMALAVVNLLGFFFTFLVPE). At 512 to 557 (TQGRSLEEISGEEKDFQGNNADEEISGERNGTRNASVDKSPETSMV) the chain is on the cytoplasmic side. Positions 519 to 557 (EISGEEKDFQGNNADEEISGERNGTRNASVDKSPETSMV) are disordered. Over residues 543–557 (TRNASVDKSPETSMV) the composition is skewed to polar residues.

The protein belongs to the major facilitator superfamily. Phosphate:H(+) symporter (TC 2.A.1.9) family.

The protein localises to the cell membrane. The catalysed reaction is phosphate(in) + H(+)(in) = phosphate(out) + H(+)(out). In terms of biological role, low-affinity transporter for external inorganic phosphate (Pi) that may be involved in the acquisition of phosphate released by arbuscular mycorrhizal (AM) fungi (e.g. Glomus versiforme and G.intraradices) during AM symbiosis; not required for mycorrhizal arbuscule development. This Medicago truncatula (Barrel medic) protein is Low affinity inorganic phosphate transporter 8.